A 330-amino-acid chain; its full sequence is Putative aminopeptidase (330 aa).

Residues H65 and D168 each coordinate a divalent metal cation. E198 acts as the Proton acceptor in catalysis. A divalent metal cation is bound by residues E199, D221, and H307.

The protein belongs to the peptidase M42 family. It depends on a divalent metal cation as a cofactor.

The polypeptide is Putative aminopeptidase (celM) (Acetivibrio thermocellus (Hungateiclostridium thermocellum)).